A 290-amino-acid chain; its full sequence is Phycobilisome 32.3 kDa linker polypeptide, phycocyanin-associated, rod (290 aa).

The PBS-linker domain occupies methionine 1–arginine 179. In terms of domain architecture, CpcD-like spans aspartate 236 to alanine 288.

This sequence belongs to the phycobilisome linker protein family.

The protein resides in the cellular thylakoid membrane. Its function is as follows. Rod linker protein, associated with phycocyanin. Linker polypeptides determine the state of aggregation and the location of the disk-shaped phycobiliprotein units within the phycobilisome and modulate their spectroscopic properties in order to mediate a directed and optimal energy transfer. The sequence is that of Phycobilisome 32.3 kDa linker polypeptide, phycocyanin-associated, rod (cpcC) from Picosynechococcus sp. (strain ATCC 27264 / PCC 7002 / PR-6) (Agmenellum quadruplicatum).